The following is a 70-amino-acid chain: Conotoxin Im23.4 (70 aa).

The N-terminal stretch at 1–22 (MIMRMTLTLFVLVVMTAASASG) is a signal peptide. Residues 23–30 (DALTEAKR) constitute a propeptide that is removed on maturation. 3 disulfides stabilise this stretch: Cys34–Cys41, Cys45–Cys53, and Cys54–Cys69.

It belongs to the conotoxin K superfamily. As to expression, expressed by the venom duct.

The protein resides in the secreted. Its function is as follows. Probable neurotoxin. In Conus imperialis (Imperial cone), this protein is Conotoxin Im23.4.